The chain runs to 104 residues: Phosphoribosyl-ATP pyrophosphatase (104 aa).

It belongs to the PRA-PH family.

The protein localises to the cytoplasm. The catalysed reaction is 1-(5-phospho-beta-D-ribosyl)-ATP + H2O = 1-(5-phospho-beta-D-ribosyl)-5'-AMP + diphosphate + H(+). The protein operates within amino-acid biosynthesis; L-histidine biosynthesis; L-histidine from 5-phospho-alpha-D-ribose 1-diphosphate: step 2/9. This chain is Phosphoribosyl-ATP pyrophosphatase, found in Rhizobium rhizogenes (strain K84 / ATCC BAA-868) (Agrobacterium radiobacter).